We begin with the raw amino-acid sequence, 258 residues long: Phosphate import ATP-binding protein PstB (258 aa).

The region spanning 5–247 (IDVSGLTAYY…ERIFSNPSVQ (243 aa)) is the ABC transporter domain. 37 to 44 (GPSGCGKS) lines the ATP pocket.

The protein belongs to the ABC transporter superfamily. Phosphate importer (TC 3.A.1.7) family. In terms of assembly, the complex is composed of two ATP-binding proteins (PstB), two transmembrane proteins (PstC and PstA) and a solute-binding protein (PstS).

The protein resides in the cell membrane. The catalysed reaction is phosphate(out) + ATP + H2O = ADP + 2 phosphate(in) + H(+). In terms of biological role, part of the ABC transporter complex PstSACB involved in phosphate import. Responsible for energy coupling to the transport system. This chain is Phosphate import ATP-binding protein PstB, found in Streptomyces avermitilis (strain ATCC 31267 / DSM 46492 / JCM 5070 / NBRC 14893 / NCIMB 12804 / NRRL 8165 / MA-4680).